We begin with the raw amino-acid sequence, 292 residues long: F-box protein SKIP28 (292 aa).

The F-box; degenerate domain maps to 21–79; sequence LIVLPYLHSLFELLSMIRVSRSLRDAIRDETALWTKLVIEPPLSSRLTDDILSEFSSKS.

In terms of assembly, part of a SCF (ASK-cullin-F-box) protein ligase complex. Interacts with SKP1A/ASK1 and CUL1.

It participates in protein modification; protein ubiquitination. In terms of biological role, component of SCF(ASK-cullin-F-box) E3 ubiquitin ligase complexes, which may mediate the ubiquitination and subsequent proteasomal degradation of target proteins. Required during the endosperm development in embryos. The polypeptide is F-box protein SKIP28 (SKIP28) (Arabidopsis thaliana (Mouse-ear cress)).